The chain runs to 426 residues: D-tagatose-1,6-bisphosphate aldolase subunit KbaZ (426 aa).

This sequence belongs to the GatZ/KbaZ family. KbaZ subfamily. In terms of assembly, forms a complex with KbaY.

Its pathway is carbohydrate metabolism; D-tagatose 6-phosphate degradation; D-glyceraldehyde 3-phosphate and glycerone phosphate from D-tagatose 6-phosphate: step 2/2. Its function is as follows. Component of the tagatose-1,6-bisphosphate aldolase KbaYZ that is required for full activity and stability of the Y subunit. Could have a chaperone-like function for the proper and stable folding of KbaY. When expressed alone, KbaZ does not show any aldolase activity. The chain is D-tagatose-1,6-bisphosphate aldolase subunit KbaZ from Escherichia coli (strain ATCC 8739 / DSM 1576 / NBRC 3972 / NCIMB 8545 / WDCM 00012 / Crooks).